Here is a 24-residue protein sequence, read N- to C-terminus: Protein YriA (24 aa).

The chain is Protein YriA from Escherichia coli (strain K12).